We begin with the raw amino-acid sequence, 242 residues long: DNA repair protein RecO (242 aa).

Belongs to the RecO family. In terms of assembly, monomer.

In terms of biological role, involved in DNA repair and RecF pathway recombination. This is DNA repair protein RecO from Shigella flexneri.